The primary structure comprises 443 residues: Protein SCAR (443 aa).

Positions 1–96 (MVLITRYLPS…DYHRNTSIDT (96 aa)) are interaction with brk1 and abiA. Residues 166 to 201 (VAEQQKLHEEARQRKRERREARLKKKGEKNEVEVKK) are a coiled coil. 2 disordered regions span residues 176–197 (ARQRKRERREARLKKKGEKNEV) and 220–386 (INIE…RSDL). The span at 178-192 (QRKRERREARLKKKG) shows a compositional bias: basic residues. A compositionally biased stretch (polar residues) spans 221–252 (NIESPHTSSPQIQHQSNNTATPQHTTQHFGTN). Composition is skewed to low complexity over residues 263 to 277 (SQSSPSQQHSPINSY) and 285 to 305 (NTSTPSPSSSFQGRPPSTGFN). A compositionally biased stretch (pro residues) spans 306–323 (TPPPPMSNNNNMPPPPPM). Residues 324 to 338 (QQNGGAANNRLSVHN) show a composition bias toward polar residues. Positions 346–365 (PAPPPPPPPPSAPAPPPPPM) are enriched in pro residues. In terms of domain architecture, WH2 spans 382–399 (ARSDLLSSIMQGMALKPA).

Belongs to the SCAR/WAVE family. Part of a Scar/WAVE complex containing brk1, scrA, abiA, pirA and napA. Interacts with brk1 and abiA.

Its subcellular location is the cytoplasm. The protein resides in the cytoskeleton. It is found in the cell projection. The protein localises to the pseudopodium tip. It localises to the filopodium tip. Functionally, involved in regulation of actin and microtubule organization. Regulates phagocytosis and macropinocytosis. The sequence is that of Protein SCAR (scrA) from Dictyostelium discoideum (Social amoeba).